A 320-amino-acid polypeptide reads, in one-letter code: Malate dehydrogenase (320 aa).

Residues 10 to 15 (GAGNIG) and Asp34 contribute to the NAD(+) site. Residues Arg83 and Arg89 each coordinate substrate. NAD(+) contacts are provided by residues Asn96 and 119-121 (ITN). 2 residues coordinate substrate: Asn121 and Arg152. His176 (proton acceptor) is an active-site residue.

This sequence belongs to the LDH/MDH superfamily. MDH type 3 family.

The catalysed reaction is (S)-malate + NAD(+) = oxaloacetate + NADH + H(+). Catalyzes the reversible oxidation of malate to oxaloacetate. The protein is Malate dehydrogenase of Sphingopyxis alaskensis (strain DSM 13593 / LMG 18877 / RB2256) (Sphingomonas alaskensis).